The sequence spans 194 residues: FMN-dependent NADH:quinone oxidoreductase (194 aa).

FMN-binding positions include S9, 15-17, and 85-88; these read SIS and MYNF.

The protein belongs to the azoreductase type 1 family. In terms of assembly, homodimer. FMN is required as a cofactor.

It catalyses the reaction 2 a quinone + NADH + H(+) = 2 a 1,4-benzosemiquinone + NAD(+). It carries out the reaction N,N-dimethyl-1,4-phenylenediamine + anthranilate + 2 NAD(+) = 2-(4-dimethylaminophenyl)diazenylbenzoate + 2 NADH + 2 H(+). Its function is as follows. Quinone reductase that provides resistance to thiol-specific stress caused by electrophilic quinones. Functionally, also exhibits azoreductase activity. Catalyzes the reductive cleavage of the azo bond in aromatic azo compounds to the corresponding amines. This is FMN-dependent NADH:quinone oxidoreductase from Xanthomonas oryzae pv. oryzae (strain MAFF 311018).